The following is a 141-amino-acid chain: Glutathione transferase FosA (141 aa).

Positions 4-117 (SLNHLTLAVS…DGHKLELHVG (114 aa)) constitute a VOC domain. Mn(2+) contacts are provided by His-7, His-67, and Glu-113.

Belongs to the fosfomycin resistance protein family. As to quaternary structure, homodimer. The cofactor is Mn(2+).

The protein localises to the cytoplasm. The enzyme catalyses RX + glutathione = an S-substituted glutathione + a halide anion + H(+). Requires the monovalent cation K(+) for optimal activity. Metalloglutathione transferase which confers resistance to fosfomycin by catalyzing the addition of glutathione to fosfomycin. This chain is Glutathione transferase FosA (fosA), found in Serratia marcescens.